The sequence spans 468 residues: Probable Xaa-Pro aminopeptidase pepP (468 aa).

Positions 265, 276, 399, and 439 each coordinate Mn(2+).

It belongs to the peptidase M24B family. It depends on Mn(2+) as a cofactor.

The enzyme catalyses Release of any N-terminal amino acid, including proline, that is linked to proline, even from a dipeptide or tripeptide.. Catalyzes the removal of a penultimate prolyl residue from the N-termini of peptides. The polypeptide is Probable Xaa-Pro aminopeptidase pepP (pepP) (Aspergillus fumigatus (strain CBS 144.89 / FGSC A1163 / CEA10) (Neosartorya fumigata)).